The primary structure comprises 353 residues: Rhodopsin (353 aa).

Residues 1-36 (MNGTEGPYFYIPMVNTTGIVRSPYEYPQYYLVNPAA) are Extracellular-facing. N-linked (GlcNAc...) asparagine glycosylation is found at Asn-2 and Asn-15. Residues 37–61 (YAALGAYMFLLILVGFPVNFLTLYV) form a helical membrane-spanning segment. Residues 62-73 (TLEHKKLRTPLN) lie on the Cytoplasmic side of the membrane. Residues 74–96 (YILLNLAVADLFMVLGGFTTTMY) form a helical membrane-spanning segment. The Extracellular segment spans residues 97-110 (TSMHGYFVLGRLGC). An intrachain disulfide couples Cys-110 to Cys-187. Residues 111 to 133 (NVEGFFATLGGEIALWSLVVLAI) form a helical membrane-spanning segment. Residues 134-136 (ERW) carry the 'Ionic lock' involved in activated form stabilization motif. The Cytoplasmic portion of the chain corresponds to 134–152 (ERWVVVCKPISNFRFSEDH). Residues 153–173 (AIMGLAFTWVMASACAVPPLV) form a helical membrane-spanning segment. Residues 174–202 (GWSRYIPEGMQCSCGIDYYTRAEGFNNES) are Extracellular-facing. Asn-200 carries an N-linked (GlcNAc...) asparagine glycan. The chain crosses the membrane as a helical span at residues 203–224 (FVIYMFVCHFLIPLVVVFFCYG). Over 225-252 (RLLCAVKEAAAAQQESETTQRAEREVSR) the chain is Cytoplasmic. A helical transmembrane segment spans residues 253 to 274 (MVVIMVVAFLVCWCPYAGVAWY). The Extracellular segment spans residues 275–286 (IFTHQGSEFGPL). The helical transmembrane segment at 287 to 308 (FMTFPAFFAKSSSIYNPMIYIC) threads the bilayer. An N6-(retinylidene)lysine modification is found at Lys-296. The Cytoplasmic segment spans residues 309 to 353 (MNKQFRHCMITTLCCGKNPFEEEEGASTTSKTEASSVSSSSVSPA). 2 S-palmitoyl cysteine lipidation sites follow: Cys-322 and Cys-323. Residues 330–353 (EEEGASTTSKTEASSVSSSSVSPA) form a disordered region. The segment covering 334–353 (ASTTSKTEASSVSSSSVSPA) has biased composition (low complexity).

The protein belongs to the G-protein coupled receptor 1 family. Opsin subfamily. Phosphorylated on some or all of the serine and threonine residues present in the C-terminal region. Post-translationally, contains one covalently linked retinal chromophore.

The protein resides in the membrane. Its subcellular location is the cell projection. It localises to the cilium. The protein localises to the photoreceptor outer segment. Its function is as follows. Photoreceptor required for image-forming vision at low light intensity. While most salt water fish species use retinal as chromophore, most freshwater fish use 3-dehydroretinal, or a mixture of retinal and 3-dehydroretinal. Light-induced isomerization of 11-cis to all-trans retinal triggers a conformational change that activates signaling via G-proteins. Subsequent receptor phosphorylation mediates displacement of the bound G-protein alpha subunit by arrestin and terminates signaling. The polypeptide is Rhodopsin (rho) (Chelon labrosus (Thicklip grey mullet)).